Here is a 453-residue protein sequence, read N- to C-terminus: MESLRSLSNISALHELLCRYSNLSGTLTWNLSSTNGTHNLTTANWPPWNLNCTPILDRKKPSPSDLNLWVRIVMYSVIFLLSVFGNTLIIIVLVMNKRLRTITNSFLLSLALSDLMVAVLCMPFTLIPNLMENFIFGEVICRAAAYFMGLSVSVSTFNLVAISIERYSAICNPLKSRVWQTRSHAYRVIAATWVLSSIIMIPYLVYNKTVTFPMKDRRVGHQCRLVWPSKQVQQAWYVLLLTILFFIPGVVMIVAYGLISRELYRGIQFEMDLNKEAKAHKNGVSTPTTIPSGDEGDGCYIQVTKRRNTMEMSTLTPSVCTKMDRARINNSEAKLMAKKRVIRMLIVIVAMFFICWMPIFVANTWKAFDELSAFNTLTGAPISFIHLLSYTSACVNPLIYCFMNKRFRKAFLGTFSSCIKPCRNFRDTDEDIAATGASLSKFSYTTVSSLGPA.

The Extracellular portion of the chain corresponds to 1–64 (MESLRSLSNI…ILDRKKPSPS (64 aa)). Asn-9, Asn-22, Asn-30, Asn-35, and Asn-39 each carry an N-linked (GlcNAc...) asparagine glycan. The chain crosses the membrane as a helical span at residues 65–94 (DLNLWVRIVMYSVIFLLSVFGNTLIIIVLV). Topologically, residues 95–104 (MNKRLRTITN) are cytoplasmic. Residues 105–131 (SFLLSLALSDLMVAVLCMPFTLIPNLM) traverse the membrane as a helical segment. Over 132 to 142 (ENFIFGEVICR) the chain is Extracellular. Cysteines 141 and 223 form a disulfide. The chain crosses the membrane as a helical span at residues 143-164 (AAAYFMGLSVSVSTFNLVAISI). At 165–184 (ERYSAICNPLKSRVWQTRSH) the chain is on the cytoplasmic side. The chain crosses the membrane as a helical span at residues 185–205 (AYRVIAATWVLSSIIMIPYLV). Over 206 to 237 (YNKTVTFPMKDRRVGHQCRLVWPSKQVQQAWY) the chain is Extracellular. The helical transmembrane segment at 238-261 (VLLLTILFFIPGVVMIVAYGLISR) threads the bilayer. Residues 262 to 343 (ELYRGIQFEM…KLMAKKRVIR (82 aa)) lie on the Cytoplasmic side of the membrane. The chain crosses the membrane as a helical span at residues 344–364 (MLIVIVAMFFICWMPIFVANT). The Extracellular portion of the chain corresponds to 365 to 379 (WKAFDELSAFNTLTG). The chain crosses the membrane as a helical span at residues 380–403 (APISFIHLLSYTSACVNPLIYCFM). A lipid anchor (S-palmitoyl cysteine) is attached at Cys-401. The Cytoplasmic portion of the chain corresponds to 404-453 (NKRFRKAFLGTFSSCIKPCRNFRDTDEDIAATGASLSKFSYTTVSSLGPA).

It belongs to the G-protein coupled receptor 1 family. In terms of tissue distribution, brain and stomach.

Its subcellular location is the cell membrane. In terms of biological role, receptor for cholecystokinin. This receptor mediates its action by association with G proteins that activate a phosphatidylinositol-calcium second messenger system. Has high affinity for CCK-8 and low affinities for gastrin-17-I, CCK-4, and unsulfated CCK-8. The polypeptide is Cholecystokinin receptor (cckar) (Xenopus laevis (African clawed frog)).